Consider the following 79-residue polypeptide: MKTLLLTLVMVTIMCLDLGYTLTCYKGYHDTVVCKPHETICYEYFIPATHGNAILARGCGTSCPGGIRPVCCRTDLSNK.

An N-terminal signal peptide occupies residues 1-21 (MKTLLLTLVMVTIMCLDLGYT). 3 disulfide bridges follow: cysteine 24/cysteine 41, cysteine 34/cysteine 59, and cysteine 63/cysteine 71.

It belongs to the three-finger toxin family. Short-chain subfamily. Type III alpha-neurotoxin sub-subfamily. In terms of tissue distribution, expressed by the venom gland.

It localises to the secreted. In terms of biological role, binds with high affinity to muscle nicotinic acetylcholine receptor (nAChR) and hinders acetylcholine binding to the receptor, thereby impairing neuromuscular transmission. Causes muscle paralysis, spasms and increased respiration. The chain is Short neurotoxin 4 from Pseudonaja textilis (Eastern brown snake).